Here is a 274-residue protein sequence, read N- to C-terminus: 2,3,4,5-tetrahydropyridine-2,6-dicarboxylate N-succinyltransferase (274 aa).

Residues R106 and D143 each coordinate substrate.

Belongs to the transferase hexapeptide repeat family. In terms of assembly, homotrimer.

The protein resides in the cytoplasm. It carries out the reaction (S)-2,3,4,5-tetrahydrodipicolinate + succinyl-CoA + H2O = (S)-2-succinylamino-6-oxoheptanedioate + CoA. It participates in amino-acid biosynthesis; L-lysine biosynthesis via DAP pathway; LL-2,6-diaminopimelate from (S)-tetrahydrodipicolinate (succinylase route): step 1/3. In Acidovorax sp. (strain JS42), this protein is 2,3,4,5-tetrahydropyridine-2,6-dicarboxylate N-succinyltransferase.